The following is a 20-amino-acid chain: Neurotoxin BmK 18(2) (20 aa).

An LCN-type CS-alpha/beta domain is found at 2 to 20 (RDAYIAEDYDCVYHCARDA).

The protein belongs to the long (4 C-C) scorpion toxin superfamily. Sodium channel inhibitor family. Alpha subfamily. Expressed by the venom gland.

It is found in the secreted. Binds to sodium channels (Nav) and inhibits the inactivation of the activated channels, thereby blocking neuronal transmission. This is Neurotoxin BmK 18(2) from Olivierus martensii (Manchurian scorpion).